A 396-amino-acid polypeptide reads, in one-letter code: Initiation-specific alpha-1,6-mannosyltransferase (396 aa).

At 1–7 the chain is on the cytoplasmic side; it reads MLRLRLR. The chain crosses the membrane as a helical; Signal-anchor for type II membrane protein span at residues 8–28; sequence SIVIGAAIAGSILLLFNHGSI. Over 29 to 396 the chain is Lumenal; the sequence is EGMEDLTEIS…HFFAGSWKDD (368 aa). A DXD motif motif is present at residues 229 to 231; that stretch reads DID. Asn-345 carries N-linked (GlcNAc...) asparagine glycosylation.

Belongs to the glycosyltransferase 32 family. Requires Mn(2+) as cofactor.

Its subcellular location is the endoplasmic reticulum membrane. The protein resides in the golgi apparatus membrane. It carries out the reaction Transfers an alpha-D-mannosyl residue from GDP-mannose into lipid-linked oligosaccharide, forming an alpha-(1-&gt;6)-D-mannosyl-D-mannose linkage.. Functionally, mannosyltransferase involved in outer chain elongation of asparagine-linked oligosaccharides of the type Man(9)GlcNAc(2). May otherwise add the first alpha-1,6-mannose to the Man(8)GlcNAc(2) core oligosaccharide from the ER. Represents the first enzymatic event required for synthesis of outer chain mannose linkages on yeast secretory proteins. This Schizosaccharomyces pombe (strain 972 / ATCC 24843) (Fission yeast) protein is Initiation-specific alpha-1,6-mannosyltransferase.